Reading from the N-terminus, the 56-residue chain is uncharacterized protein (56 aa).

4Fe-4S ferredoxin-type domains follow at residues 2–28 and 29–56; these read VKIDYKKCGYCGACVGVCEKLAINLIE and HIIVIDEKKCNNCKLCTIVCPLNALEGE. 8 residues coordinate [4Fe-4S] cluster: cysteine 9, cysteine 12, cysteine 15, cysteine 19, cysteine 38, cysteine 41, cysteine 44, and cysteine 48.

It depends on [4Fe-4S] cluster as a cofactor.

Its function is as follows. Ferredoxins are iron-sulfur proteins that transfer electrons in a wide variety of metabolic reactions. This is an uncharacterized protein from Methanocaldococcus jannaschii (strain ATCC 43067 / DSM 2661 / JAL-1 / JCM 10045 / NBRC 100440) (Methanococcus jannaschii).